The chain runs to 207 residues: Ras-related protein Rab-5B (207 aa).

A lipid anchor (N-myristoyl glycine) is attached at glycine 2. Residues 41 to 49 (GDSGVGKSS), 60 to 66 (SEKHQVT), 90 to 94 (DTGGQ), 148 to 151 (NKKD), and 176 to 178 (SAK) contribute to the GTP site. An Effector region motif is present at residues 63-71 (HQVTIGAAF).

It belongs to the small GTPase superfamily. Rab family. In terms of assembly, interacts with CK1. May interact with ARF1. Post-translationally, myristoylation is required for cell membrane and food vacuole membrane localization. May be palmitoylated on Cys-3. In terms of processing, lacks the C-terminal cysteine motifs subject to isoprenylation present in mammalian RAB5B homolog.

Its subcellular location is the cell membrane. It is found in the vacuole membrane. It localises to the vesicle. It carries out the reaction GTP + H2O = GDP + phosphate + H(+). Its activity is regulated as follows. Alternates between an inactive GDP-bound form and an active GTP-bound form. Activated by guanine nucleotide-exchange factors (GEFs) and inactivated by GTPase-activating proteins (GAPs). Small GTPase which regulates vesicle trafficking between organelles. May be involved in the trafficking of the N-myristoylated AK2 from the endoplasmic reticulum to the parasitophorous vacuole membrane. This Plasmodium falciparum (isolate 3D7) protein is Ras-related protein Rab-5B.